The chain runs to 251 residues: 1-(5-phosphoribosyl)-5-[(5-phosphoribosylamino)methylideneamino] imidazole-4-carboxamide isomerase (251 aa).

The active-site Proton acceptor is Asp8. Asp129 acts as the Proton donor in catalysis.

The protein belongs to the HisA/HisF family.

It is found in the cytoplasm. It carries out the reaction 1-(5-phospho-beta-D-ribosyl)-5-[(5-phospho-beta-D-ribosylamino)methylideneamino]imidazole-4-carboxamide = 5-[(5-phospho-1-deoxy-D-ribulos-1-ylimino)methylamino]-1-(5-phospho-beta-D-ribosyl)imidazole-4-carboxamide. Its pathway is amino-acid biosynthesis; L-histidine biosynthesis; L-histidine from 5-phospho-alpha-D-ribose 1-diphosphate: step 4/9. This chain is 1-(5-phosphoribosyl)-5-[(5-phosphoribosylamino)methylideneamino] imidazole-4-carboxamide isomerase, found in Desulfosudis oleivorans (strain DSM 6200 / JCM 39069 / Hxd3) (Desulfococcus oleovorans).